Reading from the N-terminus, the 97-residue chain is F-actin-capping protein subunit beta (97 aa).

2 disordered regions span residues 1 to 27 and 43 to 66; these read RLPP…AMPS and KSGS…ETVS. The span at 43–57 shows a compositional bias: polar residues; it reads KSGSGTMNLGGSLTR. Residue K97 is modified to N6-acetyllysine.

This sequence belongs to the F-actin-capping protein beta subunit family. As to quaternary structure, component of the F-actin capping complex, composed of a heterodimer of an alpha and a beta subunit. Subunit of dynactin, a multiprotein complex part of a tripartite complex with dynein and a adapter, such as BICDL1, BICD2 or HOOK3. The dynactin complex is built around ACTR1A/ACTB filament and consists of an actin-related filament composed of a shoulder domain, a pointed end and a barbed end. Its length is defined by its flexible shoulder domain. The soulder is composed of 2 DCTN1 subunits, 4 DCTN2 and 2 DCTN3. The 4 DCNT2 (via N-terminus) bind the ACTR1A filament and act as molecular rulers to determine the length. The pointed end is important for binding dynein-dynactin cargo adapters. Consists of 4 subunits: ACTR10, DCNT4, DCTN5 and DCTN6. The barbed end is composed of a CAPZA1:CAPZB heterodimers, which binds ACTR1A/ACTB filament and dynactin and stabilizes dynactin. Interacts with ARHGAP17. Interaction with RCSD1/CAPZIP. Component of the WASH complex, composed of F-actin-capping protein subunit alpha (CAPZA1, CAPZA2 or CAPZA3), F-actin-capping protein subunit beta (CAPZB), WASH (WASHC1, WASH2P, WASH3P, WASH4P, WASH5P or WASH6P), WASHC2 (WASHC2A or WASHC2C), WASHC3, WASHC4 and WASHC5. Interacts with ACTG1. Directly interacts with CRACD; this interaction decreases binding to actin.

It is found in the cytoplasm. Its subcellular location is the cytoskeleton. It localises to the myofibril. The protein resides in the sarcomere. F-actin-capping proteins bind in a Ca(2+)-independent manner to the fast growing ends of actin filaments (barbed end) thereby blocking the exchange of subunits at these ends. Unlike other capping proteins (such as gelsolin and severin), these proteins do not sever actin filaments. Plays a role in the regulation of cell morphology and cytoskeletal organization. Forms, with CAPZB, the barbed end of the fast growing ends of actin filaments in the dynactin complex and stabilizes dynactin structure. The dynactin multiprotein complex activates the molecular motor dynein for ultra-processive transport along microtubules. The chain is F-actin-capping protein subunit beta from Mesocricetus auratus (Golden hamster).